An 89-amino-acid polypeptide reads, in one-letter code: Protein XhlA (89 aa).

A helical transmembrane segment spans residues 63 to 83; that stretch reads ITGAIITAVSTGIIGGAIAIM.

To B.licheniformis xpaF1 and xpaL1.

Its subcellular location is the cell membrane. In terms of biological role, associated with cell lysis upon induction of PbsX. In Bacillus subtilis (strain 168), this protein is Protein XhlA (xhlA).